The following is a 58-amino-acid chain: Lantibiotic macedovicin (58 aa).

Positions 1–25 are excised as a propeptide; sequence MMNATENQIFVETVSDQELEMLIGG. 2,3-didehydrobutyrine is present on residues threonine 33 and threonine 35. 2 cross-links (beta-methyllanthionine (Thr-Cys)) span residues 33-38 and 35-57; these read TLTKDC and TKDC…CKNC. A disulfide bridge connects residues cysteine 46 and cysteine 54.

Post-translationally, maturation of macedovicin involves the enzymatic dehydration of Thr-33 and Thr-35 into dehydrobutyrine residues, that can form a beta-methyllanthionine bond with Cys-38 and Cys-57, respectively. This is followed by membrane translocation and cleavage of the modified precursor.

It localises to the secreted. Functionally, lanthionine-containing peptide antibiotic (lantibiotic) active on Gram-positive bacteria. Macedovicin inhibits a broad spectrum of lactic acid bacteria, several food spoilage species (e.g. Clostridium spp.) and oral streptococci. The bactericidal activity of lantibiotics is based on depolarization of energized bacterial cytoplasmic membranes, initiated by the formation of aqueous transmembrane pores. This is Lantibiotic macedovicin from Streptococcus macedonicus (strain ACA-DC 198).